The following is a 962-amino-acid chain: Glycine dehydrogenase (decarboxylating) (962 aa).

Residue Lys709 is modified to N6-(pyridoxal phosphate)lysine.

The protein belongs to the GcvP family. The glycine cleavage system is composed of four proteins: P, T, L and H. The cofactor is pyridoxal 5'-phosphate.

The catalysed reaction is N(6)-[(R)-lipoyl]-L-lysyl-[glycine-cleavage complex H protein] + glycine + H(+) = N(6)-[(R)-S(8)-aminomethyldihydrolipoyl]-L-lysyl-[glycine-cleavage complex H protein] + CO2. In terms of biological role, the glycine cleavage system catalyzes the degradation of glycine. The P protein binds the alpha-amino group of glycine through its pyridoxal phosphate cofactor; CO(2) is released and the remaining methylamine moiety is then transferred to the lipoamide cofactor of the H protein. This is Glycine dehydrogenase (decarboxylating) from Shewanella sp. (strain MR-4).